Here is a 233-residue protein sequence, read N- to C-terminus: H-2 class II histocompatibility antigen, A-F alpha chain (233 aa).

Residues 1-88 (EDDIEADHVG…KRSNFTPATN (88 aa)) form an alpha-1 region. At 1-195 (EDDIEADHVG…IPAPMSELTE (195 aa)) the chain is on the extracellular side. The segment at 89–182 (EAPQATVFPK…GLEEPVLKHW (94 aa)) is alpha-2. The Ig-like C1-type domain occupies 91-183 (PQATVFPKSP…LEEPVLKHWE (93 aa)). The cysteines at positions 111 and 167 are disulfide-linked. N122 is a glycosylation site (N-linked (GlcNAc...) asparagine). A connecting peptide region spans residues 183–195 (EPEIPAPMSELTE). Residues 196–221 (TVVCALGLSVGLVGIVVGTIFIIQGL) traverse the membrane as a helical segment. Over 222 to 233 (RSGGTSRHPGPL) the chain is Cytoplasmic.

Belongs to the MHC class II family.

It is found in the membrane. The protein is H-2 class II histocompatibility antigen, A-F alpha chain (H2-Aa) of Mus musculus (Mouse).